Here is a 465-residue protein sequence, read N- to C-terminus: Uronate isomerase (465 aa).

The protein belongs to the metallo-dependent hydrolases superfamily. Uronate isomerase family.

The enzyme catalyses D-glucuronate = D-fructuronate. It carries out the reaction aldehydo-D-galacturonate = keto-D-tagaturonate. It functions in the pathway carbohydrate metabolism; pentose and glucuronate interconversion. The polypeptide is Uronate isomerase (Bacillus velezensis (strain DSM 23117 / BGSC 10A6 / LMG 26770 / FZB42) (Bacillus amyloliquefaciens subsp. plantarum)).